The chain runs to 512 residues: L-aspartate oxidase (512 aa).

Residues 17-20 (SGLA) and 46-53 (SSAWAQGG) each bind FAD. Arg278 (proton donor/acceptor) is an active-site residue. FAD is bound by residues Glu361 and 377–378 (SL).

This sequence belongs to the FAD-dependent oxidoreductase 2 family. NadB subfamily. The cofactor is FAD.

The protein resides in the cytoplasm. It carries out the reaction L-aspartate + O2 = iminosuccinate + H2O2. Its pathway is cofactor biosynthesis; NAD(+) biosynthesis; iminoaspartate from L-aspartate (oxidase route): step 1/1. In terms of biological role, catalyzes the oxidation of L-aspartate to iminoaspartate, the first step in the de novo biosynthesis of NAD(+). In Xylella fastidiosa (strain 9a5c), this protein is L-aspartate oxidase (nadB).